The sequence spans 449 residues: MVANLPALFSLGVFVGVILLIMSEKIHLTIAAFLGALILVFTHVITLKEGIDYISQSYATLALFFGVMVLVRSFEPTKIFEYLATQMVLLAKGSGKLLMLGVIAITTPICAVLPNATTVMLLAPLIPPLAQEIGVDFVPILILMVFVANSAGLLTLVGDPATFIVGDAINISFNDYLFKLSFMGVLAIVSIVVITPFLFRHIWRSRFTHLEDLPHPQINHPKVLMAGGVIITLVLIFFVIGESLPVPIPPASVALMGACLALLLASQSKIDTVHNILRDVDWSTLIFFMSIFVIIGSLEKTGVTASLAQLLAVVVGQNIAFGAIVLVFTVGLLSSVVPNIPLVVAMVPLLKQYVVNIGFAGPEILGANFDGQLPAEVLPLFYAMMFGATLGGNGTLVGASSNIVAAGISEQHGRPISFHRFLRYGLPVMAVQLVVAALFVAWLMFTQQG.

A run of 13 helical transmembrane segments spans residues 1–21, 26–46, 51–71, 97–117, 137–157, 178–198, 223–243, 244–264, 285–305, 310–330, 340–360, 377–397, and 425–445; these read MVAN…ILLI, IHLT…HVIT, IDYI…MVLV, LLML…PNAT, FVPI…LTLV, FKLS…TPFL, VLMA…IGES, LPVP…ALLL, LIFF…GVTA, LLAV…VFTV, IPLV…IGFA, VLPL…GTLV, and GLPV…WLMF.

Belongs to the CitM (TC 2.A.11) transporter family.

The protein localises to the cell membrane. This is an uncharacterized protein from Synechocystis sp. (strain ATCC 27184 / PCC 6803 / Kazusa).